Reading from the N-terminus, the 154-residue chain is Endoribonuclease YbeY (154 aa).

The Zn(2+) site is built by histidine 120, histidine 124, and histidine 130.

It belongs to the endoribonuclease YbeY family. Zn(2+) is required as a cofactor.

It localises to the cytoplasm. Functionally, single strand-specific metallo-endoribonuclease involved in late-stage 70S ribosome quality control and in maturation of the 3' terminus of the 16S rRNA. The chain is Endoribonuclease YbeY from Leptospira biflexa serovar Patoc (strain Patoc 1 / Ames).